Reading from the N-terminus, the 301-residue chain is Outer membrane porin G (301 aa).

An N-terminal signal peptide occupies residues 1–21; it reads MKKLLPCTALVMCAGMACAQA. A run of 16 beta stranded transmembrane segments spans residues 27-35, 47-57, 64-72, 89-98, 104-112, 129-136, 149-158, 172-182, 186-195, 201-209, 213-222, 230-238, 240-248, 254-265, 269-279, and 289-300; these read WHFNIGAMY, MDGLAEPSVYF, WRIALAYYQ, RPELEVHYQF, FSFGLTGGF, NMQRWKIA, FNGWLSMYKF, VETETGLQYTF, VALRVNYYLE, DDSRNNGEF, EIRAYLPLTL, YTRIGLDRW, NWDWQDDIE, FNRVGLFYGYDF, LSVSLEYAFEW, and KFHYAGVGVNYS.

In terms of assembly, monomer.

Its subcellular location is the cell outer membrane. Functionally, forms channels functionally larger than those of classical porins. Its function is as follows. May act as a regulator of the RCS-phosphorelay signal transduction pathway. This chain is Outer membrane porin G (ompG), found in Escherichia coli (strain K12).